A 296-amino-acid chain; its full sequence is Protoheme IX farnesyltransferase (296 aa).

Transmembrane regions (helical) follow at residues 8-28 (VTKP…FLLA), 35-55 (YPLF…GCVF), 84-104 (VSLV…YIGA), 107-127 (LAMW…SLYM), 132-152 (VYGT…GYCA), 162-182 (LILL…IAIF), 208-228 (ITVY…GGYA), 229-249 (GYKY…MALR), and 263-283 (LFVF…IDFS).

It belongs to the UbiA prenyltransferase family. Protoheme IX farnesyltransferase subfamily.

It localises to the cell inner membrane. The catalysed reaction is heme b + (2E,6E)-farnesyl diphosphate + H2O = Fe(II)-heme o + diphosphate. The protein operates within porphyrin-containing compound metabolism; heme O biosynthesis; heme O from protoheme: step 1/1. Functionally, converts heme B (protoheme IX) to heme O by substitution of the vinyl group on carbon 2 of heme B porphyrin ring with a hydroxyethyl farnesyl side group. The protein is Protoheme IX farnesyltransferase of Serratia proteamaculans (strain 568).